The primary structure comprises 660 residues: tRNA 5-methylaminomethyl-2-thiouridine biosynthesis bifunctional protein MnmC (660 aa).

Residues 1 to 242 (MTDRIVPATL…KRAMLVGEFA (242 aa)) form a tRNA (mnm(5)s(2)U34)-methyltransferase region. The tract at residues 266 to 660 (IGAGLAGCAV…VRALRHGRVA (395 aa)) is FAD-dependent cmnm(5)s(2)U34 oxidoreductase.

It in the N-terminal section; belongs to the methyltransferase superfamily. tRNA (mnm(5)s(2)U34)-methyltransferase family. The protein in the C-terminal section; belongs to the DAO family. FAD serves as cofactor.

It is found in the cytoplasm. The catalysed reaction is 5-aminomethyl-2-thiouridine(34) in tRNA + S-adenosyl-L-methionine = 5-methylaminomethyl-2-thiouridine(34) in tRNA + S-adenosyl-L-homocysteine + H(+). In terms of biological role, catalyzes the last two steps in the biosynthesis of 5-methylaminomethyl-2-thiouridine (mnm(5)s(2)U) at the wobble position (U34) in tRNA. Catalyzes the FAD-dependent demodification of cmnm(5)s(2)U34 to nm(5)s(2)U34, followed by the transfer of a methyl group from S-adenosyl-L-methionine to nm(5)s(2)U34, to form mnm(5)s(2)U34. In Burkholderia mallei (strain NCTC 10247), this protein is tRNA 5-methylaminomethyl-2-thiouridine biosynthesis bifunctional protein MnmC.